We begin with the raw amino-acid sequence, 268 residues long: Secreted RxLR effector protein 32 (268 aa).

The N-terminal stretch at 1 to 21 is a signal peptide; that stretch reads MRGAYYVAFALLVAASTRTAA. A RxLR-dEER motif is present at residues 50–71; that stretch reads RILRESPDPKDRLPVYASDEER. Residues 120–257 form a disordered region; sequence PKLEIKKSKR…PTPESLGIGG (138 aa). The span at 148-161 shows a compositional bias: low complexity; that stretch reads SNSKKSLVSSASAK. Positions 212–224 are enriched in basic and acidic residues; the sequence is NLDKNKRPDEAKI.

This sequence belongs to the RxLR effector family.

Its subcellular location is the secreted. It is found in the host cell. Functionally, secreted effector that completely suppresses the host cell death induced by cell death-inducing proteins. The polypeptide is Secreted RxLR effector protein 32 (Plasmopara viticola (Downy mildew of grapevine)).